Consider the following 98-residue polypeptide: NADH-ubiquinone oxidoreductase chain 4L (98 aa).

Transmembrane regions (helical) follow at residues 1–21 (MPPI…GLLM), 29–49 (SLLC…ILSL), and 61–81 (IILL…LVMI).

The protein belongs to the complex I subunit 4L family. Core subunit of respiratory chain NADH dehydrogenase (Complex I) which is composed of 45 different subunits.

Its subcellular location is the mitochondrion inner membrane. The catalysed reaction is a ubiquinone + NADH + 5 H(+)(in) = a ubiquinol + NAD(+) + 4 H(+)(out). Functionally, core subunit of the mitochondrial membrane respiratory chain NADH dehydrogenase (Complex I) which catalyzes electron transfer from NADH through the respiratory chain, using ubiquinone as an electron acceptor. Part of the enzyme membrane arm which is embedded in the lipid bilayer and involved in proton translocation. This is NADH-ubiquinone oxidoreductase chain 4L (MT-ND4L) from Galeopterus variegatus (Malayan flying lemur).